A 776-amino-acid polypeptide reads, in one-letter code: Protocadherin beta-16 (776 aa).

An N-terminal signal peptide occupies residues 1–28 (MEIGWMHNRRQRQVLVFFVLLSLSGAGA). At 29–690 (ELGSYSVVEE…TQANSLTVYL (662 aa)) the chain is on the extracellular side. Cadherin domains lie at 35–133 (VVEE…SPMF), 138–242 (MILK…APEF), 247–347 (YKVQ…PPQV), 352–451 (LTSP…APTF), and 456–561 (YTLF…SPFV). Residues Asn-418 and Asn-436 are each glycosylated (N-linked (GlcNAc...) asparagine). A glycan (N-linked (GlcNAc...) asparagine) is linked at Asn-567. Positions 568 to 671 (GSAPCTELVP…LVDGFSQPFL (104 aa)) constitute a Cadherin 6 domain. The helical transmembrane segment at 691 to 711 (VVALASVSSLFLFSVLLFVAV) threads the bilayer. The Cytoplasmic portion of the chain corresponds to 712-776 (RLCRRSRAAS…LKPIIPNFSP (65 aa)).

It is found in the membrane. Functionally, potential calcium-dependent cell-adhesion protein. May be involved in the establishment and maintenance of specific neuronal connections in the brain. In Homo sapiens (Human), this protein is Protocadherin beta-16.